The primary structure comprises 500 residues: Glycerol kinase (500 aa).

An ADP-binding site is contributed by threonine 12. Residues threonine 12, threonine 13, and serine 14 each coordinate ATP. Sn-glycerol 3-phosphate is bound at residue threonine 12. ADP is bound at residue arginine 16. Residues arginine 82, glutamate 83, tyrosine 135, and aspartate 245 each coordinate sn-glycerol 3-phosphate. Glycerol is bound by residues arginine 82, glutamate 83, tyrosine 135, aspartate 245, and glutamine 246. ADP contacts are provided by threonine 267 and glycine 310. ATP-binding residues include threonine 267, glycine 310, glutamine 314, and glycine 411. Residues glycine 411 and asparagine 415 each coordinate ADP.

It belongs to the FGGY kinase family. Homotetramer and homodimer (in equilibrium).

It carries out the reaction glycerol + ATP = sn-glycerol 3-phosphate + ADP + H(+). It functions in the pathway polyol metabolism; glycerol degradation via glycerol kinase pathway; sn-glycerol 3-phosphate from glycerol: step 1/1. Activated by phosphorylation and inhibited by fructose 1,6-bisphosphate (FBP). In terms of biological role, key enzyme in the regulation of glycerol uptake and metabolism. Catalyzes the phosphorylation of glycerol to yield sn-glycerol 3-phosphate. The protein is Glycerol kinase of Clostridium perfringens (strain 13 / Type A).